Consider the following 177-residue polypeptide: Large ribosomal subunit protein uL6 (177 aa).

The protein belongs to the universal ribosomal protein uL6 family. Part of the 50S ribosomal subunit.

Its function is as follows. This protein binds to the 23S rRNA, and is important in its secondary structure. It is located near the subunit interface in the base of the L7/L12 stalk, and near the tRNA binding site of the peptidyltransferase center. The sequence is that of Large ribosomal subunit protein uL6 from Rickettsia felis (strain ATCC VR-1525 / URRWXCal2) (Rickettsia azadi).